The sequence spans 598 residues: Ecto-NOX disulfide-thiol exchanger 2 (598 aa).

The 80-residue stretch at K99–A178 folds into the RRM domain. Coiled-coil stretches lie at residues I264 to I299 and R352 to N476.

It belongs to the ENOX family. Cu cation serves as cofactor. Glycosylated.

It is found in the cell membrane. Its subcellular location is the secreted. The protein resides in the extracellular space. Inhibited by the antitumor sulfonylurea LY181984, the vabilloid capsaicin, and retinoids. In terms of biological role, may be involved in cell growth. Probably acts as a terminal oxidase of plasma electron transport from cytosolic NAD(P)H via hydroquinones to acceptors at the cell surface. Hydroquinone oxidase activity alternates with a protein disulfide-thiol interchange/oxidoreductase activity which may control physical membrane displacements associated with vesicle budding or cell enlargement. The activities oscillate with a period length of 22 minutes and play a role in control of the ultradian cellular biological clock. The polypeptide is Ecto-NOX disulfide-thiol exchanger 2 (Enox2) (Mus musculus (Mouse)).